Here is a 551-residue protein sequence, read N- to C-terminus: Malate synthase, glyoxysomal (551 aa).

The active-site Proton acceptor is the Arg174. Asp458 functions as the Proton donor in the catalytic mechanism.

This sequence belongs to the malate synthase family.

The protein localises to the glyoxysome. It carries out the reaction glyoxylate + acetyl-CoA + H2O = (S)-malate + CoA + H(+). Its pathway is carbohydrate metabolism; glyoxylate cycle; (S)-malate from isocitrate: step 2/2. The polypeptide is Malate synthase, glyoxysomal (PMS1) (Candida tropicalis (Yeast)).